The chain runs to 193 residues: MLRYNLGMGLILASASPRRSELLRKARMVFRVEPAHVPEVHTAGEDPKQYAQRLARDKARAVAAKYPNDFVIGADTIVVADAHVLEKPADEADAARMIRMLSGHTHEVTTGVCLCGPNVEIVETETTRVTVAEISDEEIADYIHTGEPMDKAGAYGIQGMFSRWVTGIEGDYFNVVGLPIARVYRMMRRAGVL.

Asp-75 acts as the Proton acceptor in catalysis.

This sequence belongs to the Maf family. YhdE subfamily. The cofactor is a divalent metal cation.

The protein resides in the cytoplasm. The enzyme catalyses dTTP + H2O = dTMP + diphosphate + H(+). It carries out the reaction UTP + H2O = UMP + diphosphate + H(+). Functionally, nucleoside triphosphate pyrophosphatase that hydrolyzes dTTP and UTP. May have a dual role in cell division arrest and in preventing the incorporation of modified nucleotides into cellular nucleic acids. This Koribacter versatilis (strain Ellin345) protein is dTTP/UTP pyrophosphatase.